Reading from the N-terminus, the 145-residue chain is uncharacterized protein (145 aa).

The protein localises to the mitochondrion. This is an uncharacterized protein from Arabidopsis thaliana (Mouse-ear cress).